The sequence spans 495 residues: DUF21 domain-containing protein At4g14230 (495 aa).

At 1–42 (MHPINAVVAARMLAGISQSNALQSEAIPFGSLEWITYAGISC) the chain is on the extracellular side. A CNNM transmembrane domain is found at 30 to 212 (GSLEWITYAG…GKGGELTHDE (183 aa)). Residues 43–63 (FLVLFAGIMSGLTLGLMSLGL) traverse the membrane as a helical segment. At 64-92 (VELEILQRSGTPKEKKQSAAIFPVVQKQH) the chain is on the cytoplasmic side. A helical transmembrane segment spans residues 93 to 113 (QLLVTLLLFNALAMEGLPIYL). Residues 114-120 (DKIFNEY) are Extracellular-facing. A helical transmembrane segment spans residues 121–141 (VAIILSVTFVLFVGEVIPQAI). The Cytoplasmic segment spans residues 142 to 146 (CTRYG). Residues 147-167 (LAVGANLVWLVRILMVLSYPI) form a helical membrane-spanning segment. The Extracellular portion of the chain corresponds to 168–495 (SFPIAKMLDW…TMTGPPQGNN (328 aa)). CBS domains are found at residues 231–291 (MTPI…TGTL), 296–356 (GIRR…NNSE), and 357–426 (LTAP…IVDE). Residues 330–354 (KGKSKGHPSTLHEENSGESNVSSNN) form a disordered region. Asparagine 349 carries N-linked (GlcNAc...) asparagine glycosylation. Serine 352 is modified (phosphoserine). N-linked (GlcNAc...) asparagine glycosylation occurs at asparagine 353. The interval 455–495 (SGRRLLGPKGSGGPKTPKASSTPKPDDKLMGTMTGPPQGNN) is disordered. Residues 456–477 (GRRLLGPKGSGGPKTPKASSTP) are compositionally biased toward low complexity.

It is found in the membrane. This is DUF21 domain-containing protein At4g14230 (CBSDUF2) from Arabidopsis thaliana (Mouse-ear cress).